Here is a 199-residue protein sequence, read N- to C-terminus: MYEGIVQDLIDELGRLPGIGPKSAQRIAFHLLAADPVDVRRLATALTEVKDKVRFCRSCFNVAQSELCRICADPRRDQALICVVEEPKDVVAIERTREFRGRYHVLGGAINPIGGVGPDDLHIRELVARLADGTVTELILATDPNTEGEVTASYLARQIGPMGLRVTRLASGLPMGGDLEWADEVTLGRAFEGRRVVNA.

The segment at 56–71 adopts a C4-type zinc-finger fold; the sequence is CRSCFNVAQSELCRIC. Residues 79–174 enclose the Toprim domain; that stretch reads ALICVVEEPK…RVTRLASGLP (96 aa).

Belongs to the RecR family.

May play a role in DNA repair. It seems to be involved in an RecBC-independent recombinational process of DNA repair. It may act with RecF and RecO. The sequence is that of Recombination protein RecR from Frankia alni (strain DSM 45986 / CECT 9034 / ACN14a).